The chain runs to 449 residues: Exodeoxyribonuclease 7 large subunit (449 aa).

Belongs to the XseA family. In terms of assembly, heterooligomer composed of large and small subunits.

It is found in the cytoplasm. It catalyses the reaction Exonucleolytic cleavage in either 5'- to 3'- or 3'- to 5'-direction to yield nucleoside 5'-phosphates.. Its function is as follows. Bidirectionally degrades single-stranded DNA into large acid-insoluble oligonucleotides, which are then degraded further into small acid-soluble oligonucleotides. In Salmonella typhimurium (strain LT2 / SGSC1412 / ATCC 700720), this protein is Exodeoxyribonuclease 7 large subunit.